A 122-amino-acid chain; its full sequence is MKYSSIFSMLSFFILFACNETAVYGSDENIIFMRYVEKLHLDKYSVKNTVKTETMAIQLAEIYVRYRYGERIAEEEKPYLITELPDSWVVEGAKLPYEVAGGVFIIEINKKNGCVLNFLHSK.

Residues 1–17 (MKYSSIFSMLSFFILFA) form the signal peptide.

This is an uncharacterized protein from Escherichia coli (strain K12).